Here is a 340-residue protein sequence, read N- to C-terminus: Holliday junction branch migration complex subunit RuvB (340 aa).

The segment at 1 to 183 is large ATPase domain (RuvB-L); that stretch reads MKRDDLVSPE…FGISFRLDYY (183 aa). Residues L22, R23, G64, K67, T68, T69, 130 to 132, R173, Y183, and R220 each bind ATP; that span reads EDF. T68 contributes to the Mg(2+) binding site. Positions 184–254 are small ATPAse domain (RuvB-S); that stretch reads AVEELTKIIN…VAVHALEMLE (71 aa). Residues 257 to 340 form a head domain (RuvB-H) region; that stretch reads DRGFDQMDRS…KFEVGQKELF (84 aa). The DNA site is built by K312 and R317.

Belongs to the RuvB family. In terms of assembly, homohexamer. Forms an RuvA(8)-RuvB(12)-Holliday junction (HJ) complex. HJ DNA is sandwiched between 2 RuvA tetramers; dsDNA enters through RuvA and exits via RuvB. An RuvB hexamer assembles on each DNA strand where it exits the tetramer. Each RuvB hexamer is contacted by two RuvA subunits (via domain III) on 2 adjacent RuvB subunits; this complex drives branch migration. In the full resolvosome a probable DNA-RuvA(4)-RuvB(12)-RuvC(2) complex forms which resolves the HJ.

Its subcellular location is the cytoplasm. It carries out the reaction ATP + H2O = ADP + phosphate + H(+). In terms of biological role, the RuvA-RuvB-RuvC complex processes Holliday junction (HJ) DNA during genetic recombination and DNA repair, while the RuvA-RuvB complex plays an important role in the rescue of blocked DNA replication forks via replication fork reversal (RFR). RuvA specifically binds to HJ cruciform DNA, conferring on it an open structure. The RuvB hexamer acts as an ATP-dependent pump, pulling dsDNA into and through the RuvAB complex. RuvB forms 2 homohexamers on either side of HJ DNA bound by 1 or 2 RuvA tetramers; 4 subunits per hexamer contact DNA at a time. Coordinated motions by a converter formed by DNA-disengaged RuvB subunits stimulates ATP hydrolysis and nucleotide exchange. Immobilization of the converter enables RuvB to convert the ATP-contained energy into a lever motion, pulling 2 nucleotides of DNA out of the RuvA tetramer per ATP hydrolyzed, thus driving DNA branch migration. The RuvB motors rotate together with the DNA substrate, which together with the progressing nucleotide cycle form the mechanistic basis for DNA recombination by continuous HJ branch migration. Branch migration allows RuvC to scan DNA until it finds its consensus sequence, where it cleaves and resolves cruciform DNA. The polypeptide is Holliday junction branch migration complex subunit RuvB (Syntrophus aciditrophicus (strain SB)).